A 244-amino-acid polypeptide reads, in one-letter code: Claudin-12 (244 aa).

Residues 1-10 (MGCRDVHAAT) lie on the Cytoplasmic side of the membrane. The helical transmembrane segment at 11–31 (VLSFLCGIASVAGLFAGTLLP) threads the bilayer. At 32 to 87 (NWRKLRLITFNRNEKNLTVYTGLWVKCARYDGSSDCLMYDTTWYSSVDQLDLRVLQ) the chain is on the extracellular side. A helical membrane pass occupies residues 88–108 (FALPLSMLIAMGALLLCLIGM). At 109–135 (CNTAFRSSVPNIKLAKCLVNSAGCHLV) the chain is on the cytoplasmic side. The helical transmembrane segment at 136–156 (AGLLFFLAGTVSLSPSIWVIF) threads the bilayer. Residues 157-174 (YNIHLNKKFEPVFSFDYA) are Extracellular-facing. A helical transmembrane segment spans residues 175–195 (VYVTIASAGGLFMTSLILFIW). At 196–244 (YCTCKSLPSPFWQPLYSHPPSMHTYSQPYSARSRLSAIEIDIPVVSHTT) the chain is on the cytoplasmic side. A phosphoserine mark is found at Ser-228 and Ser-231.

The protein belongs to the claudin family. In terms of assembly, interacts with OCLN.

It localises to the cell junction. The protein resides in the tight junction. Its subcellular location is the cell membrane. In terms of biological role, plays a major role in tight junction-specific obliteration of the intercellular space, through calcium-independent cell-adhesion activity. The sequence is that of Claudin-12 (CLDN12) from Pongo abelii (Sumatran orangutan).